We begin with the raw amino-acid sequence, 880 residues long: Pyruvate, phosphate dikinase (880 aa).

The N-terminal stretch occupies residues 1–348 (MNKLIYYFGN…LYILQTRTAK (348 aa)). Arg97 lines the ATP pocket. The interval 349–405 (RTAIAAINIAVQMVKEKLISKEQALMRIDPESLNQLLHTRIDYSKGLTSIAEGLPAS) is linker 1. Residues 406 to 503 (PGAATGIVVF…VIKQGDIITI (98 aa)) are central. Thr458 is modified (phosphothreonine; by PDRP1). His460 functions as the Tele-phosphohistidine intermediate in the catalytic mechanism. Residues 504-538 (DGGSGKIFLGEMPLIQPTFSEESKLILDWADEISS) are linker 2. The interval 539-880 (LKVRANAETV…AAQAKIKQGS (342 aa)) is C-terminal. Positions 566, 622, 750, 771, 772, 773, and 774 each coordinate substrate. Glu750 contributes to the Mg(2+) binding site. Asp774 provides a ligand contact to Mg(2+). Catalysis depends on Cys836, which acts as the Proton donor.

It belongs to the PEP-utilizing enzyme family. In terms of assembly, homodimer. Mg(2+) serves as cofactor. In terms of processing, phosphorylation of Thr-458 in the dark inactivates the enzyme. Dephosphorylation upon light stimulation reactivates the enzyme.

It carries out the reaction pyruvate + phosphate + ATP = phosphoenolpyruvate + AMP + diphosphate + H(+). Its activity is regulated as follows. Activated by light-induced dephosphorylation. Inhibited by dark-induced phosphorylation. Both reactions are catalyzed by PDRP1. Catalyzes the reversible phosphorylation of pyruvate and phosphate. This is Pyruvate, phosphate dikinase (ppdK) from Rickettsia prowazekii (strain Madrid E).